We begin with the raw amino-acid sequence, 660 residues long: Acetyl-coenzyme A synthetase (660 aa).

CoA-binding positions include 197–200 and Thr-317; that span reads RGGK. ATP is bound by residues 397-399, 421-426, Asp-512, and Arg-528; these read GEP and DTFWQT. Ser-536 is a CoA binding site. Arg-539 provides a ligand contact to ATP. Mg(2+) is bound by residues Val-550 and Val-555. Lys-625 bears the N6-acetyllysine mark.

This sequence belongs to the ATP-dependent AMP-binding enzyme family. Mg(2+) serves as cofactor. In terms of processing, acetylated. Deacetylation by the SIR2-homolog deacetylase activates the enzyme.

The catalysed reaction is acetate + ATP + CoA = acetyl-CoA + AMP + diphosphate. In terms of biological role, catalyzes the conversion of acetate into acetyl-CoA (AcCoA), an essential intermediate at the junction of anabolic and catabolic pathways. AcsA undergoes a two-step reaction. In the first half reaction, AcsA combines acetate with ATP to form acetyl-adenylate (AcAMP) intermediate. In the second half reaction, it can then transfer the acetyl group from AcAMP to the sulfhydryl group of CoA, forming the product AcCoA. The sequence is that of Acetyl-coenzyme A synthetase from Cupriavidus metallidurans (strain ATCC 43123 / DSM 2839 / NBRC 102507 / CH34) (Ralstonia metallidurans).